The following is a 271-amino-acid chain: Very long chain fatty acid elongase 3 (271 aa).

Asn6 carries an N-linked (GlcNAc...) asparagine glycan. Helical transmembrane passes span 30-50 (FLEE…LLIV), 67-87 (PLIL…LRMW), 116-136 (FWSF…AFII), 141-161 (PLIF…SFGY), 165-187 (VPSG…TYYT), 199-219 (LPMV…IFGI), and 236-256 (HFFW…HFFH).

This sequence belongs to the ELO family. ELOVL3 subfamily. In terms of assembly, interacts with TECR. In terms of processing, N-Glycosylated. In terms of tissue distribution, expressed in brown adipose tissue and liver. In the skin, strong expressed in the cells of the inner layer of the outer root sheath of the hair follicles and in the sebocytes of the sebaceous glands. Hardly detectable in the epidermis and not at all in fibroblasts.

It is found in the endoplasmic reticulum membrane. It carries out the reaction a very-long-chain acyl-CoA + malonyl-CoA + H(+) = a very-long-chain 3-oxoacyl-CoA + CO2 + CoA. The catalysed reaction is eicosanoyl-CoA + malonyl-CoA + H(+) = 3-oxodocosanoyl-CoA + CO2 + CoA. It catalyses the reaction hexadecanoyl-CoA + malonyl-CoA + H(+) = 3-oxooctadecanoyl-CoA + CO2 + CoA. The enzyme catalyses octadecanoyl-CoA + malonyl-CoA + H(+) = 3-oxoeicosanoyl-CoA + CO2 + CoA. It carries out the reaction (9Z)-octadecenoyl-CoA + malonyl-CoA + H(+) = 3-oxo-(11Z)-eicosenoyl-CoA + CO2 + CoA. The catalysed reaction is (9Z,12Z)-octadecadienoyl-CoA + malonyl-CoA + H(+) = (11Z,14Z)-3-oxoicosa-11,14-dienoyl-CoA + CO2 + CoA. It catalyses the reaction (9Z,12Z,15Z)-octadecatrienoyl-CoA + malonyl-CoA + H(+) = (11Z,14Z,17Z)-3-oxoeicosatrienoyl-CoA + CO2 + CoA. The enzyme catalyses docosanoyl-CoA + malonyl-CoA + H(+) = 3-oxotetracosanoyl-CoA + CO2 + CoA. It carries out the reaction tetradecanoyl-CoA + malonyl-CoA + H(+) = 3-oxohexadecanoyl-CoA + CO2 + CoA. It participates in lipid metabolism; polyunsaturated fatty acid biosynthesis. In terms of biological role, catalyzes the first and rate-limiting reaction of the four reactions that constitute the long-chain fatty acids elongation cycle. This endoplasmic reticulum-bound enzymatic process allows the addition of 2 carbons to the chain of long- and very long-chain fatty acids (VLCFAs) per cycle. Condensing enzyme that exhibits activity toward saturated and unsaturated acyl-CoA substrates with higher activity toward C18 acyl-CoAs, especially C18:0 acyl-CoAs. May participate in the production of saturated and monounsaturated VLCFAs of different chain lengths that are involved in multiple biological processes as precursors of membrane lipids and lipid mediators. Participates in the formation of certain VLCFA and triglycerides in certain cells of the hair follicles and the sebaceous glands, required for skin barrier function. Critical enzyme for lipid accumulation and metabolic activity in brown adipocytes during the early phase of the tissue recruitment. Plays a role in lipid storage and in resistance to diet-induced obesity. The sequence is that of Very long chain fatty acid elongase 3 from Mus musculus (Mouse).